A 129-amino-acid polypeptide reads, in one-letter code: uncharacterized protein (129 aa).

This is an uncharacterized protein from Mycobacterium bovis (strain ATCC BAA-935 / AF2122/97).